The sequence spans 224 residues: Homeobox protein Hox-B6 (224 aa).

Positions 127–132 (VYPWMQ) match the Antp-type hexapeptide motif. Residues 146–205 (GRRGRQTYTRYQTLELEKEFHYNRYLTRRRRIEIAHALCLTERQIKIWFQNRRMKWKKES) constitute a DNA-binding region (homeobox). S214 is modified (phosphoserine).

This sequence belongs to the Antp homeobox family.

It is found in the nucleus. Its function is as follows. Sequence-specific transcription factor which is part of a developmental regulatory system that provides cells with specific positional identities on the anterior-posterior axis. This is Homeobox protein Hox-B6 (HOXB6) from Homo sapiens (Human).